The primary structure comprises 181 residues: SAGA-associated factor 11 (181 aa).

An SGF11-type zinc finger spans residues 93-114 (FNCMNCGRQIVAGRFAPHLEKC). Residues 116–125 (GKGRKARAKT) show a composition bias toward basic residues. Residues 116 to 181 (GKGRKARAKT…FTVRENVKGD (66 aa)) are disordered. Low complexity predominate over residues 126–153 (TRSTTAAQNRNARRSPNPRYSPYPNSAS).

Belongs to the SGF11 family. Component of a deubiquitination module (DUB module) formed by ENY2, SGF11, and UBP22 in Arabidopsis. Interacts directly with ENY2 and UBP22. Interacts with DDA1. Post-translationally, ubiquitinated in DET1-dependent manner. Ubiquitination probably leads to its subsequent proteasomal degradation.

The protein resides in the nucleus. It localises to the nucleoplasm. Component of a deubiquitination module (DUB module) that specifically deubiquinates monoubiquinated histone H2B (H2Bub). Does not seem to be a component of the TREX-2 complex. Seems to act independently of the SAGA multiprotein complex. The DUB module is responsible for the major H2Bub deubiquitinase activity in Arabidopsis. This is SAGA-associated factor 11 from Arabidopsis thaliana (Mouse-ear cress).